Consider the following 63-residue polypeptide: Small ribosomal subunit protein bS21 (63 aa).

Belongs to the bacterial ribosomal protein bS21 family.

The chain is Small ribosomal subunit protein bS21 from Bacteroides fragilis (strain ATCC 25285 / DSM 2151 / CCUG 4856 / JCM 11019 / LMG 10263 / NCTC 9343 / Onslow / VPI 2553 / EN-2).